The following is an 84-amino-acid chain: Small ribosomal subunit protein uS17 (84 aa).

It belongs to the universal ribosomal protein uS17 family. As to quaternary structure, part of the 30S ribosomal subunit.

Functionally, one of the primary rRNA binding proteins, it binds specifically to the 5'-end of 16S ribosomal RNA. The sequence is that of Small ribosomal subunit protein uS17 from Clostridium kluyveri (strain NBRC 12016).